A 774-amino-acid polypeptide reads, in one-letter code: MAHEAMEYDVQVQLNHAEQQPAPAGMASSQGGPALLQPVPADVVSSQGVPSILQPAPAEVISSQATPPLLQPAPQLSVDLTEVEVLGEDTVENINPRTSEQHRQGSDGNHTIPASSLHSMTNFISGLQRLHGMLEFLRPSSSNHSVGPMRTRRRVSASRRARAGGSQRTDSARLRAPLDAYFQVSRTQPDLPATTYDSETRNPVSEELQVSSSSDSDSDSSAEYGGVVDQAEESGAVILEEQLAGVSAEQEVTCIDGGKTLPKQPSPQKSEPLLPSASMDEEEGDTCTICLEQWTNAGDHRLSALRCGHLFGYRCISTWLKGQVRKCPQCNKKARHSDIVVLYARTLRALDTSEQERMKSSLLKEQMLRKQAELESAQCRLQLQVLTDKCTRLQRRVQDLQKLTSHQSQNLQQPRGSQAWVLSCSPSSQGQHKHKYHFQKTFTVSQAGNCRIMAYCDALSCLVISQPSPQASFLPGFGVKMLSTANMKSSQYIPMHGKQIRGLAFSSYLRGLLLSASLDNTIKLTSLETNTVVQTYNAGRPVWSCCWCLDEANYIYAGLANGSILVYDVRNTSSHVQELVAQKARCPLVSLSYMPRAASAAFPYGGVLAGTLEDASFWEQKMDFSHWPHVLPLEPGGCIDFQTENSSRHCLVTYRPDKNHTTIRSVLMEMSYRLDDTGNPICSCQPVHTFFGGPTCKLLTKNAIFQSPENDGNILVCTGDEAANSALLWDAASGSLLQDLQTDQPVLDICPFEVNRNSYLATLTEKMVHIYKWE.

A phosphoserine; by ATM and ATR mark is found at Ser-46 and Ser-63. Disordered regions lie at residues 95-116 (NPRT…PASS), 139-225 (PSSS…AEYG), and 257-280 (GGKT…ASMD). Residues 106-116 (SDGNHTIPASS) are compositionally biased toward polar residues. Residues 150–162 (RTRRRVSASRRAR) show a composition bias toward basic residues. A compositionally biased stretch (low complexity) spans 211 to 221 (SSSSDSDSDSS). The RING-type; degenerate zinc finger occupies 287-331 (CTICLEQWTNAGDHRLSALRCGHLFGYRCISTWLKGQVRKCPQCN). Positions 361-413 (SLLKEQMLRKQAELESAQCRLQLQVLTDKCTRLQRRVQDLQKLTSHQSQNLQQ) form a coiled coil. WD repeat units lie at residues 495-537 (MHGK…QTYN), 539-577 (GRPV…SHVQ), and 583-628 (KARC…SHWP).

Interacts with MDM2 and p53/TP53. Binds to the RPA complex via direct interaction with RPA2. Interacts with RAD51. In terms of processing, phosphorylated at Ser-46 and Ser-63 upon DNA damage by ATM or ATR. ATM phosphorylation occurs at early times upon DNA damage, while ATR is the major kinase at later times. Phosphorylation by ATM and ATR is required to stabilize p53/TP53. Part of the phosphorylation depends upon RPA2 presence.

It is found in the nucleus. It localises to the PML body. The protein resides in the cytoplasm. It catalyses the reaction S-ubiquitinyl-[E2 ubiquitin-conjugating enzyme]-L-cysteine + [acceptor protein]-L-lysine = [E2 ubiquitin-conjugating enzyme]-L-cysteine + N(6)-ubiquitinyl-[acceptor protein]-L-lysine.. Its pathway is protein modification; protein ubiquitination. E3 ubiquitin-protein ligase required for the repair of DNA interstrand cross-links (ICL) in response to DNA damage. Plays a key role in RPA-mediated DNA damage signaling and repair. Acts by mediating ubiquitination of the RPA complex (RPA1, RPA2 and RPA3 subunits) and RAD51 at stalled replication forks, leading to remove them from DNA damage sites and promote homologous recombination. Also mediates the ubiquitination of p53/TP53 in the late response to DNA damage, and acts as a positive regulator of p53/TP53 stability, thereby regulating the G1/S DNA damage checkpoint. May act by catalyzing the formation of short polyubiquitin chains on p53/TP53 that are not targeted to the proteasome. In response to ionizing radiation, interacts with MDM2 and enhances p53/TP53 ubiquitination, possibly by restricting MDM2 from extending polyubiquitin chains on ubiquitinated p53/TP53. Required to translesion DNA synthesis across DNA-protein cross-link adducts by catalyzing ubiquitination of proteins on single-stranded DNA (ssDNA). The chain is E3 ubiquitin-protein ligase RFWD3 from Homo sapiens (Human).